The primary structure comprises 244 residues: tRNA pseudouridine synthase B (244 aa).

Asp-46 (nucleophile) is an active-site residue.

Belongs to the pseudouridine synthase TruB family. Type 1 subfamily.

It catalyses the reaction uridine(55) in tRNA = pseudouridine(55) in tRNA. Functionally, responsible for synthesis of pseudouridine from uracil-55 in the psi GC loop of transfer RNAs. This is tRNA pseudouridine synthase B from Bordetella avium (strain 197N).